Reading from the N-terminus, the 775-residue chain is Kojibiose phosphorylase (775 aa).

361 to 362 (WD) provides a ligand contact to substrate. Glu-501 serves as the catalytic Proton donor. A substrate-binding site is contributed by 614-615 (KQ).

This sequence belongs to the glycosyl hydrolase 65 family. As to quaternary structure, homohexamer.

The catalysed reaction is kojibiose + phosphate = beta-D-glucose 1-phosphate + D-glucose. Its activity is regulated as follows. Inhibited by Hg(2+) and Pb(2+). Catalyzes the reversible phosphorolysis of kojibiose into beta-D-glucose 1-phosphate (Glc1P) and D-glucose. Can act with alpha-1,2-oligoglucans, such as selaginose, but more slowly. Inactive when disaccharides with linkages other than alpha-1,2 linkages, such as sophorose, trehalose, neotrehalose, nigerose, laminaribiose, maltose, cellobiose, isomaltose, gentiobiose, sucrose and lactose, are used as substrates. In contrast, shows broad specificity for the reverse reaction. Various monosaccharides and disaccharides having a glucosyl residue at the non-reducing end are effective acceptors. The protein is Kojibiose phosphorylase of Thermoanaerobacter brockii (Thermoanaerobium brockii).